Consider the following 199-residue polypeptide: Riboflavin synthase (199 aa).

Lumazine-binding repeat units follow at residues 1–95 and 96–188; these read MFSG…IGGH and FVSG…VDTI. Residues 4–6, 46–48, 60–65, 99–101, Lys-130, 139–141, and 153–158 each bind 2,4-dihydroxypteridine; these read GII, CLT, DVTEET, GHV, SLT, and SLIPET.

In terms of assembly, homotrimer.

It carries out the reaction 2 6,7-dimethyl-8-(1-D-ribityl)lumazine + H(+) = 5-amino-6-(D-ribitylamino)uracil + riboflavin. The protein operates within cofactor biosynthesis; riboflavin biosynthesis; riboflavin from 2-hydroxy-3-oxobutyl phosphate and 5-amino-6-(D-ribitylamino)uracil: step 2/2. In terms of biological role, catalyzes the dismutation of two molecules of 6,7-dimethyl-8-ribityllumazine, resulting in the formation of riboflavin and 5-amino-6-(D-ribitylamino)uracil. This chain is Riboflavin synthase (ribE), found in Chlamydia trachomatis serovar D (strain ATCC VR-885 / DSM 19411 / UW-3/Cx).